The chain runs to 268 residues: Nickel import ATP-binding protein NikE (268 aa).

The ABC transporter domain maps to 4-252 (LNVCGLSHHY…SSDAGRVLQN (249 aa)). ATP is bound at residue 45 to 52 (GRSGCGKS).

This sequence belongs to the ABC transporter superfamily. Nickel importer (TC 3.A.1.5.3) family. As to quaternary structure, the complex is composed of two ATP-binding proteins (NikD and NikE), two transmembrane proteins (NikB and NikC) and a solute-binding protein (NikA).

The protein resides in the cell inner membrane. The catalysed reaction is Ni(2+)(out) + ATP + H2O = Ni(2+)(in) + ADP + phosphate + H(+). Functionally, part of the ABC transporter complex NikABCDE involved in nickel import. Responsible for energy coupling to the transport system. This is Nickel import ATP-binding protein NikE from Shigella flexneri serotype 5b (strain 8401).